A 768-amino-acid chain; its full sequence is U-box domain-containing protein 45 (768 aa).

The U-box domain occupies 278-352; it reads VPPEELRCPI…SSWCEQNGVQ (75 aa). ARM repeat units follow at residues 454–497, 500–540, 542–579, 581–620, and 623–662; these read EEAR…NLAV, NRNK…CLEE, KPVI…HLST, PPNI…NLVL, and AGKD…ILCN.

As to quaternary structure, binds to SD129.

It carries out the reaction S-ubiquitinyl-[E2 ubiquitin-conjugating enzyme]-L-cysteine + [acceptor protein]-L-lysine = [E2 ubiquitin-conjugating enzyme]-L-cysteine + N(6)-ubiquitinyl-[acceptor protein]-L-lysine.. It functions in the pathway protein modification; protein ubiquitination. Its function is as follows. Functions as an E3 ubiquitin ligase. This Arabidopsis thaliana (Mouse-ear cress) protein is U-box domain-containing protein 45 (PUB45).